A 213-amino-acid chain; its full sequence is Ribosomal RNA small subunit methyltransferase G (213 aa).

S-adenosyl-L-methionine is bound by residues G55, A105 to E106, and R124.

The protein belongs to the methyltransferase superfamily. RNA methyltransferase RsmG family.

It localises to the cytoplasm. Functionally, specifically methylates the N7 position of a guanine in 16S rRNA. The sequence is that of Ribosomal RNA small subunit methyltransferase G from Fervidobacterium nodosum (strain ATCC 35602 / DSM 5306 / Rt17-B1).